The sequence spans 228 residues: Probable septum site-determining protein MinC (228 aa).

The protein belongs to the MinC family. As to quaternary structure, interacts with MinD and FtsZ.

Functionally, cell division inhibitor that blocks the formation of polar Z ring septums. Rapidly oscillates between the poles of the cell to destabilize FtsZ filaments that have formed before they mature into polar Z rings. Prevents FtsZ polymerization. This Bacillus anthracis (strain A0248) protein is Probable septum site-determining protein MinC.